Here is a 208-residue protein sequence, read N- to C-terminus: Uracil phosphoribosyltransferase (208 aa).

Residues Arg78, Arg103, and 130–138 (DPMLATGGS) contribute to the 5-phospho-alpha-D-ribose 1-diphosphate site. Uracil is bound by residues Ile193 and 198–200 (GDA). Position 199 (Asp199) interacts with 5-phospho-alpha-D-ribose 1-diphosphate.

It belongs to the UPRTase family. It depends on Mg(2+) as a cofactor.

It carries out the reaction UMP + diphosphate = 5-phospho-alpha-D-ribose 1-diphosphate + uracil. Its pathway is pyrimidine metabolism; UMP biosynthesis via salvage pathway; UMP from uracil: step 1/1. Allosterically activated by GTP. Its function is as follows. Catalyzes the conversion of uracil and 5-phospho-alpha-D-ribose 1-diphosphate (PRPP) to UMP and diphosphate. The sequence is that of Uracil phosphoribosyltransferase from Roseiflexus castenholzii (strain DSM 13941 / HLO8).